A 340-amino-acid polypeptide reads, in one-letter code: Eukaryotic translation initiation factor 3 subunit I (340 aa).

WD repeat units follow at residues 8–47 (GHERSLNQIKFNRDGDLLFSVAKDKIVCAWWSANGERLGT), 50–91 (GHQG…KVWD), 150–189 (CTESKATVAGWSYLGKYIIAGHEDGSVSQYDGKTGEQLEN), 194–233 (EFDHQINDIQFSQDRTYFITASKDKSAKLISSRNLAILKT), and 291–330 (GHFGPLNTVDVHPNGTAYASGGEDGYVRVHHFDKPYFDFM).

Belongs to the eIF-3 subunit I family. Component of the eukaryotic translation initiation factor 3 (eIF-3) complex.

The protein localises to the cytoplasm. In terms of biological role, component of the eukaryotic translation initiation factor 3 (eIF-3) complex, which is involved in protein synthesis of a specialized repertoire of mRNAs and, together with other initiation factors, stimulates binding of mRNA and methionyl-tRNAi to the 40S ribosome. The eIF-3 complex specifically targets and initiates translation of a subset of mRNAs involved in cell proliferation. The chain is Eukaryotic translation initiation factor 3 subunit I (tif34) from Aspergillus fumigatus (strain CBS 144.89 / FGSC A1163 / CEA10) (Neosartorya fumigata).